The chain runs to 441 residues: MSTLTPREIVSELDRFVVGQEKAKRMVAVAMRNRWRRQRLEPSLRDEVAPKNIIMMGPTGVGKTEIARRLARLCGAPFIKVEATKYTEVGYVGRDVESMVRDLMEIGVSLIRDEEATRVRARAEAAAEERLLDLLLPQSPADGGETRQSTRDKLRGLWRQGHLDDREVDMEVEESTKGPQMDIFAMPGMESMGNQFRDLMGKAFPARRKMRKMKLREAWNLLVDEEASRLLDQDKVVDIARERVEQTGIIFIDELDKVASGEGTHRTTDISREGVQRDLLPIVEGSVVNTKYGMVRTDHILFIAAGAFHFSKPSDLIPELQGRFPLRVELDALGRDEFYRILTEPHNALTRQYAALLATEGVTVSFTDDGLREIAAFAEEVNEETENIGARRLYTMMERILADISFDAPDRPGEHVTVDAAYVRTHLEDVRVDKDLSRYIL.

ATP contacts are provided by residues Val18, 60 to 65 (GVGKTE), Asp253, Glu319, and Arg391.

This sequence belongs to the ClpX chaperone family. HslU subfamily. A double ring-shaped homohexamer of HslV is capped on each side by a ring-shaped HslU homohexamer. The assembly of the HslU/HslV complex is dependent on binding of ATP.

The protein resides in the cytoplasm. In terms of biological role, ATPase subunit of a proteasome-like degradation complex; this subunit has chaperone activity. The binding of ATP and its subsequent hydrolysis by HslU are essential for unfolding of protein substrates subsequently hydrolyzed by HslV. HslU recognizes the N-terminal part of its protein substrates and unfolds these before they are guided to HslV for hydrolysis. This is ATP-dependent protease ATPase subunit HslU from Nitratidesulfovibrio vulgaris (strain DP4) (Desulfovibrio vulgaris).